The primary structure comprises 416 residues: Tryptophan synthase beta chain (416 aa).

Lysine 109 carries the post-translational modification N6-(pyridoxal phosphate)lysine.

Belongs to the TrpB family. Tetramer of two alpha and two beta chains. Pyridoxal 5'-phosphate is required as a cofactor.

The enzyme catalyses (1S,2R)-1-C-(indol-3-yl)glycerol 3-phosphate + L-serine = D-glyceraldehyde 3-phosphate + L-tryptophan + H2O. It functions in the pathway amino-acid biosynthesis; L-tryptophan biosynthesis; L-tryptophan from chorismate: step 5/5. Functionally, the beta subunit is responsible for the synthesis of L-tryptophan from indole and L-serine. The polypeptide is Tryptophan synthase beta chain (Synechococcus sp. (strain WH7803)).